The sequence spans 368 residues: MISSLHRPTVATVDLQAIRDNIKAVQEHISSTTKTFAVVKANAYGHGAIQVAKAVDEEVDAFCVSNLDEALELRQAGIEKDILILGVILANEIPLAIEHSITITVASNEWLESAKACQKDLAQLHVHVKVDSGMGRIGVRSLEEANQLIAGLTKSGAHVDGIFTHFATADEENTDKFHQQLAFFTDLVNALAIKPELVHASNSATSLWHSDTIFNAVRLGIVIYGLNPSGKTLNLPYPLKPALSLSSRLVHIKKIKAGNTVGYGATYTAKTEEYVGTLPIGYADGWTRDMQGYSVIIDGHLCEIIGRVSMDQLTVRLPKAFDIGQEVTLIGQEGHQMISATDIAEKRGTINYEVLCLLSDRIPRHYIN.

Lys-40 (proton acceptor; specific for D-alanine) is an active-site residue. Position 40 is an N6-(pyridoxal phosphate)lysine (Lys-40). A substrate-binding site is contributed by Arg-136. Catalysis depends on Tyr-263, which acts as the Proton acceptor; specific for L-alanine. Met-310 provides a ligand contact to substrate.

Belongs to the alanine racemase family. It depends on pyridoxal 5'-phosphate as a cofactor.

It carries out the reaction L-alanine = D-alanine. The protein operates within amino-acid biosynthesis; D-alanine biosynthesis; D-alanine from L-alanine: step 1/1. Its function is as follows. Catalyzes the interconversion of L-alanine and D-alanine. May also act on other amino acids. The protein is Alanine racemase (alr) of Streptococcus uberis (strain ATCC BAA-854 / 0140J).